The sequence spans 418 residues: Serine/threonine transporter SstT (418 aa).

8 consecutive transmembrane segments (helical) span residues 21-41, 49-69, 83-103, 142-162, 190-210, 217-237, 299-319, and 331-351; these read ILIGLVAGIVLALVSTPAAIA, FVGALKAVAPVLVLMLVIASI, ILFLYVLGAFSAALVAVVVSF, ALLNANYIGILAWAVGLGIAL, FAPLGIFGLVASTIAATGFGA, LLVVLIGCMLLVALVVNPLIV, MAGAAITITVLTLAAVHTLGI, and VVAAVCACGASGVAGGSLLLI.

The protein belongs to the dicarboxylate/amino acid:cation symporter (DAACS) (TC 2.A.23) family.

It localises to the cell inner membrane. It carries out the reaction L-serine(in) + Na(+)(in) = L-serine(out) + Na(+)(out). The enzyme catalyses L-threonine(in) + Na(+)(in) = L-threonine(out) + Na(+)(out). Its function is as follows. Involved in the import of serine and threonine into the cell, with the concomitant import of sodium (symport system). The polypeptide is Serine/threonine transporter SstT (Yersinia pseudotuberculosis serotype O:1b (strain IP 31758)).